The primary structure comprises 552 residues: (R)-mandelonitrile lyase-like (552 aa).

The first 28 residues, 1 to 28 (MTKRIDSSLLYTALVVLLLLGVVHRSNA), serve as a signal peptide directing secretion. N44 is a glycosylation site (N-linked (GlcNAc...) asparagine). 55–82 (DYIIVGGGTAGCPLAATLSQSFRVLLLE) serves as a coordination point for FAD. N-linked (GlcNAc...) asparagine glycosylation is found at N162, N259, and N434. The Proton acceptor role is filled by H492.

This sequence belongs to the GMC oxidoreductase family. Monomer. It depends on FAD as a cofactor. Post-translationally, glycosylated.

The enzyme catalyses (R)-mandelonitrile = benzaldehyde + hydrogen cyanide. The chain is (R)-mandelonitrile lyase-like from Arabidopsis thaliana (Mouse-ear cress).